The primary structure comprises 113 residues: U11-theraphotoxin-Hhn1l (113 aa).

The first 21 residues, 1 to 21 (MNTGRVTFLVVFLVAVSLGPA), serve as a signal peptide directing secretion. Positions 22 to 74 (DKEENPMEMQEKTQQGKNYLNFGENLVVPKLEELKAKLVEKESKKSKNSRQKR) are excised as a propeptide. Intrachain disulfides connect Cys-82-Cys-95 and Cys-89-Cys-110.

The protein belongs to the neurotoxin 14 (magi-1) family. 01 (HNTX-16) subfamily. As to expression, expressed by the venom gland.

The protein localises to the secreted. Its function is as follows. Probable ion channel inhibitor. This Cyriopagopus hainanus (Chinese bird spider) protein is U11-theraphotoxin-Hhn1l.